The following is a 224-amino-acid chain: Peptidyl-prolyl cis-trans isomerase FKBP3 (224 aa).

Alanine 2 is subject to N-acetylalanine. A Phosphoserine modification is found at serine 36. Basic and acidic residues predominate over residues 89-102; the sequence is KLNEDKPKETKSEE. The segment at 89–111 is disordered; that stretch reads KLNEDKPKETKSEETLDEGPPKY. The residue at position 99 (lysine 99) is an N6-acetyllysine. One can recognise a PPIase FKBP-type domain in the interval 128–224; the sequence is GDVVHCWYTG…TFEVELVDID (97 aa). Serine 152 carries the phosphoserine modification. An N6-acetyllysine modification is found at lysine 170.

It belongs to the FKBP-type PPIase family.

Its subcellular location is the nucleus. It catalyses the reaction [protein]-peptidylproline (omega=180) = [protein]-peptidylproline (omega=0). With respect to regulation, inhibited preferentially by rapamycin over FK506. In terms of biological role, FK506- and rapamycin-binding proteins (FKBPs) constitute a family of receptors for the two immunosuppressants which inhibit T-cell proliferation by arresting two distinct cytoplasmic signal transmission pathways. PPIases accelerate the folding of proteins. This Homo sapiens (Human) protein is Peptidyl-prolyl cis-trans isomerase FKBP3 (FKBP3).